We begin with the raw amino-acid sequence, 205 residues long: Outer-membrane lipoprotein LolB (205 aa).

The first 17 residues, 1–17 (MFLRHVIVFSLIALLTG), serve as a signal peptide directing secretion. Cysteine 18 carries the N-palmitoyl cysteine lipid modification. Cysteine 18 carries S-diacylglycerol cysteine lipidation.

The protein belongs to the LolB family. As to quaternary structure, monomer.

The protein localises to the cell outer membrane. Functionally, plays a critical role in the incorporation of lipoproteins in the outer membrane after they are released by the LolA protein. The protein is Outer-membrane lipoprotein LolB of Pseudomonas savastanoi pv. phaseolicola (strain 1448A / Race 6) (Pseudomonas syringae pv. phaseolicola (strain 1448A / Race 6)).